We begin with the raw amino-acid sequence, 189 residues long: Chitin synthase 1 (189 aa).

Belongs to the chitin synthase family. Class I subfamily.

It is found in the cell membrane. It catalyses the reaction [(1-&gt;4)-N-acetyl-beta-D-glucosaminyl](n) + UDP-N-acetyl-alpha-D-glucosamine = [(1-&gt;4)-N-acetyl-beta-D-glucosaminyl](n+1) + UDP + H(+). Its function is as follows. Polymerizes chitin, a structural polymer of the cell wall and septum, by transferring the sugar moiety of UDP-GlcNAc to the non-reducing end of the growing chitin polymer. In Rhinocladiella atrovirens, this protein is Chitin synthase 1 (CHS1).